The following is a 387-amino-acid chain: 3-ketoacyl-CoA thiolase (387 aa).

Cysteine 91 serves as the catalytic Acyl-thioester intermediate. Active-site proton acceptor residues include histidine 343 and cysteine 373.

It belongs to the thiolase-like superfamily. Thiolase family. In terms of assembly, heterotetramer of two alpha chains (FadB) and two beta chains (FadA).

It is found in the cytoplasm. It carries out the reaction an acyl-CoA + acetyl-CoA = a 3-oxoacyl-CoA + CoA. It participates in lipid metabolism; fatty acid beta-oxidation. Its function is as follows. Catalyzes the final step of fatty acid oxidation in which acetyl-CoA is released and the CoA ester of a fatty acid two carbons shorter is formed. This is 3-ketoacyl-CoA thiolase from Aliivibrio salmonicida (strain LFI1238) (Vibrio salmonicida (strain LFI1238)).